The chain runs to 341 residues: Phenylalanine--tRNA ligase alpha subunit (341 aa).

Residue Glu-256 coordinates Mg(2+).

It belongs to the class-II aminoacyl-tRNA synthetase family. Phe-tRNA synthetase alpha subunit type 1 subfamily. Tetramer of two alpha and two beta subunits. The cofactor is Mg(2+).

It localises to the cytoplasm. It carries out the reaction tRNA(Phe) + L-phenylalanine + ATP = L-phenylalanyl-tRNA(Phe) + AMP + diphosphate + H(+). The protein is Phenylalanine--tRNA ligase alpha subunit of Chlamydia caviae (strain ATCC VR-813 / DSM 19441 / 03DC25 / GPIC) (Chlamydophila caviae).